The following is a 101-amino-acid chain: Interleukin-8 (101 aa).

The signal sequence occupies residues 1 to 22 (MTSKLAVALLAAFLLSAALCEA). Arg27 is modified (citrulline). Cystine bridges form between Cys34–Cys61 and Cys36–Cys77.

It belongs to the intercrine alpha (chemokine CxC) family. As to quaternary structure, homodimer. Interacts with TNFAIP6 (via Link domain); this interaction interferes with chemokine binding to glycosaminoglycans. In terms of processing, citrullination at Arg-27 prevents proteolysis, and dampens tissue inflammation, it also enhances leukocytosis, possibly through impaired chemokine clearance from the blood circulation.

It localises to the secreted. Chemotactic factor that mediates inflammatory response by attracting neutrophils, basophils, and T-cells to clear pathogens and protect the host from infection. Also plays an important role in neutrophil activation. Released in response to an inflammatory stimulus, exerts its effect by binding to the G-protein-coupled receptors CXCR1 and CXCR2, primarily found in neutrophils, monocytes and endothelial cells. G-protein heterotrimer (alpha, beta, gamma subunits) constitutively binds to CXCR1/CXCR2 receptor and activation by IL8 leads to beta and gamma subunits release from Galpha (GNAI2 in neutrophils) and activation of several downstream signaling pathways including PI3K and MAPK pathways. The chain is Interleukin-8 (CXCL8) from Ovis aries (Sheep).